Here is a 148-residue protein sequence, read N- to C-terminus: MVIILLGVSIVVPGLFLATETPQTNTFEQTELERATLTGEVSTEVTQVTNQEQVNITVLNRRDGTIDSTGELQVGESANLTISGETITVEIIDVIDTDNVLVRYTYPLYVGWPSGAETIITNIADIIIMATAVMIIGAIYTGYKVSIK.

The signal sequence occupies residues 1–18 (MVIILLGVSIVVPGLFLA). Residues 19–118 (TETPQTNTFE…YVGWPSGAET (100 aa)) are Extracellular-facing. The helical transmembrane segment at 119-139 (IITNIADIIIMATAVMIIGAI) threads the bilayer. The Cytoplasmic segment spans residues 140–148 (YTGYKVSIK).

It localises to the host membrane. The sequence is that of Putative transmembrane protein ORF23 from His1 virus (isolate Australia/Victoria) (His1V).